We begin with the raw amino-acid sequence, 110 residues long: Protein E7 (110 aa).

The tract at residues 1–47 is E7 terminal domain; it reads MHGPKPTVQEIVLELCPCNEIEPVDLVCHEQLGDSDDEIDEPDHAVN. An LXCXE motif; interaction with host RB1 and TMEM173/STING motif is present at residues 26–30; that stretch reads LVCHE. A zinc finger spans residues 69–105; sequence CCKCNNLLQLVVEASRENLRNVELLFMDSLNFVCPWC. The short motif at 87–95 is the Nuclear export signal element; that stretch reads LRNVELLFM.

This sequence belongs to the papillomaviridae E7 protein family. As to quaternary structure, homodimer. Homooligomer. Interacts with host RB1; this interaction induces dissociation of RB1-E2F1 complex thereby disrupting RB1 activity. Interacts with host EP300; this interaction represses EP300 transcriptional activity. Interacts with protein E2; this interaction inhibits E7 oncogenic activity. Interacts with host TMEM173/STING; this interaction impairs the ability of TMEM173/STING to sense cytosolic DNA and promote the production of type I interferon (IFN-alpha and IFN-beta). Highly phosphorylated.

Its subcellular location is the host cytoplasm. It localises to the host nucleus. In terms of biological role, plays a role in viral genome replication by driving entry of quiescent cells into the cell cycle. Stimulation of progression from G1 to S phase allows the virus to efficiently use the cellular DNA replicating machinery to achieve viral genome replication. E7 protein has both transforming and trans-activating activities. Induces the disassembly of the E2F1 transcription factor from RB1, with subsequent transcriptional activation of E2F1-regulated S-phase genes. Interferes with host histone deacetylation mediated by HDAC1 and HDAC2, leading to transcription activation. Also plays a role in the inhibition of both antiviral and antiproliferative functions of host interferon alpha. Interaction with host TMEM173/STING impairs the ability of TMEM173/STING to sense cytosolic DNA and promote the production of type I interferon (IFN-alpha and IFN-beta). This is Protein E7 from Human papillomavirus type ME180.